Consider the following 718-residue polypeptide: DNA ligase (718 aa).

NAD(+) contacts are provided by residues Asp-44 to Asp-48, Ser-93 to Leu-94, and Glu-127. Lys-129 (N6-AMP-lysine intermediate) is an active-site residue. Arg-150, Glu-186, Lys-302, and Lys-326 together coordinate NAD(+). The Zn(2+) site is built by Cys-432, Cys-435, Cys-456, and Cys-462. The BRCT domain maps to Thr-640–Gly-718.

Belongs to the NAD-dependent DNA ligase family. LigA subfamily. Mg(2+) serves as cofactor. The cofactor is Mn(2+).

The catalysed reaction is NAD(+) + (deoxyribonucleotide)n-3'-hydroxyl + 5'-phospho-(deoxyribonucleotide)m = (deoxyribonucleotide)n+m + AMP + beta-nicotinamide D-nucleotide.. Its function is as follows. DNA ligase that catalyzes the formation of phosphodiester linkages between 5'-phosphoryl and 3'-hydroxyl groups in double-stranded DNA using NAD as a coenzyme and as the energy source for the reaction. It is essential for DNA replication and repair of damaged DNA. The protein is DNA ligase of Rhizobium etli (strain ATCC 51251 / DSM 11541 / JCM 21823 / NBRC 15573 / CFN 42).